A 125-amino-acid polypeptide reads, in one-letter code: Small ribosomal subunit protein uS13 (125 aa).

Residues 94-125 (SLPVRGQRTRTNARTRKGKRKTVAGKKKAVKK) are disordered.

Belongs to the universal ribosomal protein uS13 family. In terms of assembly, part of the 30S ribosomal subunit. Forms a loose heterodimer with protein S19. Forms two bridges to the 50S subunit in the 70S ribosome.

In terms of biological role, located at the top of the head of the 30S subunit, it contacts several helices of the 16S rRNA. In the 70S ribosome it contacts the 23S rRNA (bridge B1a) and protein L5 of the 50S subunit (bridge B1b), connecting the 2 subunits; these bridges are implicated in subunit movement. Contacts the tRNAs in the A and P-sites. The protein is Small ribosomal subunit protein uS13 of Chlorobium chlorochromatii (strain CaD3).